A 364-amino-acid chain; its full sequence is Solute carrier family 35 member C2 (364 aa).

The next 2 membrane-spanning stretches (helical) occupy residues Ala14–Tyr34 and Phe42–Leu62. N-linked (GlcNAc...) asparagine glycosylation occurs at Asn102. A run of 7 helical transmembrane segments spans residues Ser104 to Ile124, Leu136 to Tyr156, Phe166 to Leu186, Phe202 to Leu222, Leu238 to Phe258, Leu272 to Gly292, and Ile295 to Ala315. A phosphoserine mark is found at Ser335 and Ser336.

It belongs to the TPT transporter family. SLC35C subfamily.

Its subcellular location is the golgi apparatus. The protein resides in the cis-Golgi network membrane. It is found in the endoplasmic reticulum-Golgi intermediate compartment membrane. In terms of biological role, may play an important role in the cellular response to tissue hypoxia. May be either a GDP-fucose transporter that competes with SLC35C1 for GDP-fucose, or a factor that otherwise enhances the fucosylation of Notch and is required for optimal Notch signaling in mammalian cells. The protein is Solute carrier family 35 member C2 (Slc35c2) of Mus musculus (Mouse).